Reading from the N-terminus, the 196-residue chain is Imidazoleglycerol-phosphate dehydratase (196 aa).

Belongs to the imidazoleglycerol-phosphate dehydratase family.

The protein resides in the cytoplasm. It carries out the reaction D-erythro-1-(imidazol-4-yl)glycerol 3-phosphate = 3-(imidazol-4-yl)-2-oxopropyl phosphate + H2O. The protein operates within amino-acid biosynthesis; L-histidine biosynthesis; L-histidine from 5-phospho-alpha-D-ribose 1-diphosphate: step 6/9. This chain is Imidazoleglycerol-phosphate dehydratase, found in Desulforudis audaxviator (strain MP104C).